The following is a 253-amino-acid chain: 5'/3'-nucleotidase SurE (253 aa).

4 residues coordinate a divalent metal cation: aspartate 8, aspartate 9, serine 39, and asparagine 92.

Belongs to the SurE nucleotidase family. A divalent metal cation is required as a cofactor.

It localises to the cytoplasm. It carries out the reaction a ribonucleoside 5'-phosphate + H2O = a ribonucleoside + phosphate. The catalysed reaction is a ribonucleoside 3'-phosphate + H2O = a ribonucleoside + phosphate. The enzyme catalyses [phosphate](n) + H2O = [phosphate](n-1) + phosphate + H(+). Its function is as follows. Nucleotidase with a broad substrate specificity as it can dephosphorylate various ribo- and deoxyribonucleoside 5'-monophosphates and ribonucleoside 3'-monophosphates with highest affinity to 3'-AMP. Also hydrolyzes polyphosphate (exopolyphosphatase activity) with the preference for short-chain-length substrates (P20-25). Might be involved in the regulation of dNTP and NTP pools, and in the turnover of 3'-mononucleotides produced by numerous intracellular RNases (T1, T2, and F) during the degradation of various RNAs. The polypeptide is 5'/3'-nucleotidase SurE (Salmonella paratyphi A (strain AKU_12601)).